Reading from the N-terminus, the 508-residue chain is uncharacterized protein (508 aa).

12 helical membrane passes run 65–87 (IFPV…SYAV), 104–124 (WSGT…SLLL), 136–156 (FLVI…PGFI), 160–180 (VLLG…TAQW), 192–212 (VWVA…YGLA), 224–244 (LIFI…LAVV), 292–312 (TWIM…IGTF), 333–353 (LPAG…SLFI), 357–377 (MVLA…LSFA), 384–404 (LAGY…FAII), 416–436 (TVGV…PQTF), and 450–470 (TMVG…YVNW).

Belongs to the major facilitator superfamily. Allantoate permease family.

The protein localises to the endoplasmic reticulum. It localises to the golgi apparatus. Its subcellular location is the membrane. This is an uncharacterized protein from Schizosaccharomyces pombe (strain 972 / ATCC 24843) (Fission yeast).